The following is a 207-amino-acid chain: MSPIQEQLTALGGVFLAAVLVDRIAKTGQVSEAALSCMLGSLLIRDPKDTLEVYGGDDINLREGYRALIGALERDPSTLQREPLRYALSMLGLERQLAKRDDLLETIGKRLPQIQSQVEHFGPAHENVIAACGGLYQDTLSTLRQRIQVHGDMRNLQQPSNASKIRALLLAGIRSARLWRQLGGHRWQLVISRRKLLKELYPLMRSS.

This sequence belongs to the HflD family.

It localises to the cytoplasm. The protein resides in the cell inner membrane. The chain is High frequency lysogenization protein HflD homolog from Pseudomonas fluorescens (strain ATCC BAA-477 / NRRL B-23932 / Pf-5).